We begin with the raw amino-acid sequence, 227 residues long: uncharacterized protein (227 aa).

The next 7 membrane-spanning stretches (helical) occupy residues 15-34 (FIAAEALYSSIIFLICFLIY), 55-77 (TFLFLGLAYFLRFVVLLLSASGV), 92-114 (AFSMAFLAYSGSAAILYTIYSLL), 121-140 (FPGEVVINGVALVIALTSLL), 145-167 (LVFLISQLALVFLLVAAIFVNYS), 180-202 (PLYILLFVFWLLNISLTFRFLPL), and 206-224 (FAIYTLSVAVILIIAYRVL).

The protein resides in the cell membrane. This is an uncharacterized protein from Archaeoglobus fulgidus (strain ATCC 49558 / DSM 4304 / JCM 9628 / NBRC 100126 / VC-16).